The sequence spans 227 residues: 2,3-bisphosphoglycerate-dependent phosphoglycerate mutase (227 aa).

Substrate contacts are provided by residues 7 to 14 (RHGFSEWN), 20 to 21 (TG), Arg59, 86 to 89 (ERHY), Lys97, 113 to 114 (RR), and 182 to 183 (GN). The active-site Tele-phosphohistidine intermediate is His8. Glu86 functions as the Proton donor/acceptor in the catalytic mechanism.

Belongs to the phosphoglycerate mutase family. BPG-dependent PGAM subfamily. As to quaternary structure, homodimer.

It catalyses the reaction (2R)-2-phosphoglycerate = (2R)-3-phosphoglycerate. Its pathway is carbohydrate degradation; glycolysis; pyruvate from D-glyceraldehyde 3-phosphate: step 3/5. In terms of biological role, catalyzes the interconversion of 2-phosphoglycerate and 3-phosphoglycerate. The polypeptide is 2,3-bisphosphoglycerate-dependent phosphoglycerate mutase (Haemophilus influenzae (strain 86-028NP)).